Reading from the N-terminus, the 543-residue chain is uncharacterized protein (543 aa).

A TRAM domain is found at 1–59 (MLKKNDIVEVEIVDLTHEGAGVAKVDGLVFFVENALPSEKILMRVLKVNKKIGFGKVEK). Gln283, Tyr312, Glu333, and Asp381 together coordinate S-adenosyl-L-methionine. Catalysis depends on Cys408, which acts as the Nucleophile.

The protein belongs to the class I-like SAM-binding methyltransferase superfamily. RNA M5U methyltransferase family.

This is an uncharacterized protein from Streptococcus pneumoniae (strain ATCC BAA-255 / R6).